The chain runs to 119 residues: NADH-quinone oxidoreductase subunit A (119 aa).

3 helical membrane passes run 7 to 27 (FPVLLFLIVGTGLGVALVSIG), 63 to 83 (LVAILFIIFDLETAFLFPWGV), and 88 to 108 (IGWPGFMAMMIFLLEFLLGFA).

Belongs to the complex I subunit 3 family. NDH-1 is composed of 14 different subunits. Subunits NuoA, H, J, K, L, M, N constitute the membrane sector of the complex.

Its subcellular location is the cell inner membrane. It catalyses the reaction a quinone + NADH + 5 H(+)(in) = a quinol + NAD(+) + 4 H(+)(out). Functionally, NDH-1 shuttles electrons from NADH, via FMN and iron-sulfur (Fe-S) centers, to quinones in the respiratory chain. The immediate electron acceptor for the enzyme in this species is believed to be ubiquinone. Couples the redox reaction to proton translocation (for every two electrons transferred, four hydrogen ions are translocated across the cytoplasmic membrane), and thus conserves the redox energy in a proton gradient. This is NADH-quinone oxidoreductase subunit A from Paraburkholderia xenovorans (strain LB400).